Here is a 209-residue protein sequence, read N- to C-terminus: Uridine kinase (209 aa).

12-19 (GGSGGGKT) provides a ligand contact to ATP.

It belongs to the uridine kinase family.

It localises to the cytoplasm. It carries out the reaction uridine + ATP = UMP + ADP + H(+). It catalyses the reaction cytidine + ATP = CMP + ADP + H(+). Its pathway is pyrimidine metabolism; CTP biosynthesis via salvage pathway; CTP from cytidine: step 1/3. It participates in pyrimidine metabolism; UMP biosynthesis via salvage pathway; UMP from uridine: step 1/1. The chain is Uridine kinase from Streptococcus agalactiae serotype III (strain NEM316).